The sequence spans 381 residues: Creatine kinase M-type (381 aa).

The 88-residue stretch at 11–98 folds into the Phosphagen kinase N-terminal domain; it reads KLNYKPQEEY…FDPIIQDRHG (88 aa). Positions 125-367 constitute a Phosphagen kinase C-terminal domain; it reads YVLSSRVRTG…KLMVEMEKKL (243 aa). 128 to 132 lines the ATP pocket; it reads SSRVR. Ser164 carries the phosphoserine modification. The residue at position 166 (Thr166) is a Phosphothreonine. Residue Ser178 is modified to Phosphoserine. At Thr180 the chain carries Phosphothreonine. His191 is an ATP binding site. Ser199 is subject to Phosphoserine. ATP-binding residues include Arg236 and Arg292. Residues Thr313 and Thr322 each carry the phosphothreonine modification. Residues 320–325 and Asp335 each bind ATP; that span reads RGTGGV. Ser372 is modified (phosphoserine).

The protein belongs to the ATP:guanido phosphotransferase family. As to quaternary structure, dimer of identical or non-identical chains, which can be either B (brain type) or M (muscle type). With MM being the major form in skeletal muscle and myocardium, MB existing in myocardium, and BB existing in many tissues, especially brain.

The protein resides in the cytoplasm. It catalyses the reaction creatine + ATP = N-phosphocreatine + ADP + H(+). Reversibly catalyzes the transfer of phosphate between ATP and various phosphogens (e.g. creatine phosphate). Creatine kinase isoenzymes play a central role in energy transduction in tissues with large, fluctuating energy demands, such as skeletal muscle, heart, brain and spermatozoa. The sequence is that of Creatine kinase M-type (Ckm) from Mus musculus (Mouse).